The following is a 717-amino-acid chain: Asp/Glu-specific dipeptidyl-peptidase (717 aa).

An N-terminal signal peptide occupies residues 1-21 (MNKRFFPTLLLAFVCSTLAYA). Catalysis depends on charge relay system residues His85, Asp226, and Ser652.

It belongs to the peptidase S46 family.

It is found in the secreted. The protein resides in the cell surface. With respect to regulation, enzyme activity is completely blocked by diisopropyl-fluorophosphates, moderately by phenylmethylsulfonyl fluoride (PMSF) and 4-(2-methyl)benzenesulfonyl fluoride, and slightly by pepstatin in vitro. Functionally, catalyzes the removal of dipeptides from the N-terminus of oligopeptides. Shows a strict specificity for acidic residues (Asp or Glu) in the P1 position, and has a hydrophobic residue preference at the P2 position. Is likely involved in amino acid metabolism and bacterial growth/survival of asaccharolytic P.endodontalis, that utilizes amino acids from extracellular proteinaceous nutrients as energy and carbon sources. This chain is Asp/Glu-specific dipeptidyl-peptidase (dpp11), found in Porphyromonas endodontalis (strain ATCC 35406 / DSM 24491 / JCM 8526 / CCUG 16442 / BCRC 14492 / NCTC 13058 / HG 370) (Bacteroides endodontalis).